The following is a 238-amino-acid chain: Survival of motor neuron-related-splicing factor 30 (238 aa).

Residues 72–132 (SWKVGDKCMA…KPVEEGRKAK (61 aa)) form the Tudor domain. Residues 142 to 160 (KKEMIAQQREYKKKKALKK) carry the Nuclear localization signal motif. Ser-201 is modified (phosphoserine). An N6-acetyllysine modification is found at Lys-219.

The protein belongs to the SMN family. As to quaternary structure, associates with spliceosomes. Associates with U4/U5/U6 tri-snRNP and with U2 snRNP.

The protein resides in the nucleus speckle. The protein localises to the nucleus. Its subcellular location is the cajal body. Functionally, involved in spliceosome assembly. This Pongo abelii (Sumatran orangutan) protein is Survival of motor neuron-related-splicing factor 30 (SMNDC1).